Consider the following 317-residue polypeptide: MKHYSVLKNEMIQALDCLKEDSILIDCTLGFGGHTIGALQAYPNIEVYAFDKDIYALNLAKERLKPYLQNIHFCHNAFSQFLDIVPNVVLPRVRGIIADIGVSSMQLDETQRGFSFVSSTLDMRMDTRADLNATKVINTYSPIRLEEIFRIYGEVRQSKKLAEIIAYERKKKPFSSCLELSTLIEQHFPRVGGIHPATLAFQALRIEVNDELGELKRLLHNIELAFDEGKIASCRVGIISFHSLEDRIIKQCFKQWSKSCICAEESLRCECGNNHAKGQILTKKPIIPTPQEIAQNKRSRSAKLRIFELKSSKDKGV.

S-adenosyl-L-methionine is bound by residues Gly-32 to His-34, Asp-51, Phe-78, Asp-99, and Gln-106.

The protein belongs to the methyltransferase superfamily. RsmH family.

The protein resides in the cytoplasm. It carries out the reaction cytidine(1402) in 16S rRNA + S-adenosyl-L-methionine = N(4)-methylcytidine(1402) in 16S rRNA + S-adenosyl-L-homocysteine + H(+). Specifically methylates the N4 position of cytidine in position 1402 (C1402) of 16S rRNA. The sequence is that of Ribosomal RNA small subunit methyltransferase H from Helicobacter hepaticus (strain ATCC 51449 / 3B1).